We begin with the raw amino-acid sequence, 593 residues long: Proteasome-associated ATPase (593 aa).

Residues 5 to 94 (DDADSRAARW…KEEIDRLAQP (90 aa)) adopt a coiled-coil conformation. An ATP-binding site is contributed by 281-286 (GCGKTL). The interval 574-593 (GKGADAGRSIETASNTGQYL) is disordered. Positions 584 to 593 (ETASNTGQYL) are enriched in polar residues. The interval 592–593 (YL) is docks into pockets in the proteasome alpha-ring.

Belongs to the AAA ATPase family. In terms of assembly, homohexamer. Assembles into a hexameric ring structure that caps the 20S proteasome core. Strongly interacts with the prokaryotic ubiquitin-like protein Pup through a hydrophobic interface; the interacting region of ARC lies in its N-terminal coiled-coil domain. There is one Pup binding site per ARC hexamer ring. Upon ATP-binding, the C-terminus of ARC interacts with the alpha-rings of the proteasome core, possibly by binding to the intersubunit pockets.

The protein operates within protein degradation; proteasomal Pup-dependent pathway. Functionally, ATPase which is responsible for recognizing, binding, unfolding and translocation of pupylated proteins into the bacterial 20S proteasome core particle. May be essential for opening the gate of the 20S proteasome via an interaction with its C-terminus, thereby allowing substrate entry and access to the site of proteolysis. Thus, the C-termini of the proteasomal ATPase may function like a 'key in a lock' to induce gate opening and therefore regulate proteolysis. The polypeptide is Proteasome-associated ATPase (Salinispora arenicola (strain CNS-205)).